The chain runs to 281 residues: Phosphatidylglycerol--prolipoprotein diacylglyceryl transferase (281 aa).

Helical transmembrane passes span 23 to 43, 71 to 91, 107 to 127, and 133 to 153; these read VGPLAVHWYGLGYVVGILFAW, FVIWAALGVVLGGRIGYVLFY, WDGGMSFHGGILGTTLAMILF, and ILVWSMFDTIAAGVPIGLGVV. Arg-154 is a binding site for a 1,2-diacyl-sn-glycero-3-phospho-(1'-sn-glycerol). The next 3 membrane-spanning stretches (helical) occupy residues 189-209, 217-237, and 247-267; these read LYEAFLEGLVLFFVLFVLVWG, GFVAGAFVTGYGLSRIAVEFF, and LFGGWLTMGMVLSVPMVLLGL.

Belongs to the Lgt family.

The protein localises to the cell inner membrane. It catalyses the reaction L-cysteinyl-[prolipoprotein] + a 1,2-diacyl-sn-glycero-3-phospho-(1'-sn-glycerol) = an S-1,2-diacyl-sn-glyceryl-L-cysteinyl-[prolipoprotein] + sn-glycerol 1-phosphate + H(+). Its pathway is protein modification; lipoprotein biosynthesis (diacylglyceryl transfer). Catalyzes the transfer of the diacylglyceryl group from phosphatidylglycerol to the sulfhydryl group of the N-terminal cysteine of a prolipoprotein, the first step in the formation of mature lipoproteins. The polypeptide is Phosphatidylglycerol--prolipoprotein diacylglyceryl transferase (Brucella abortus (strain S19)).